We begin with the raw amino-acid sequence, 314 residues long: Regulator of microtubule dynamics protein 1 (314 aa).

Lysine 165 is modified (N6-succinyllysine). 2 TPR repeats span residues 168–204 and 222–258; these read AICLSDVGDYEGIKAKIANAYIIKEHFEKAIELNPKD and PWYQRRIAKMLFATPPSSTYEKALGYFHRAEQVDPNF.

Belongs to the RMDN family. Interacts with microtubules.

It localises to the cytoplasm. Its subcellular location is the cytoskeleton. It is found in the spindle. The protein localises to the spindle pole. The polypeptide is Regulator of microtubule dynamics protein 1 (RMDN1) (Homo sapiens (Human)).